We begin with the raw amino-acid sequence, 121 residues long: Large ribosomal subunit protein bL19 (121 aa).

It belongs to the bacterial ribosomal protein bL19 family.

This protein is located at the 30S-50S ribosomal subunit interface and may play a role in the structure and function of the aminoacyl-tRNA binding site. The protein is Large ribosomal subunit protein bL19 of Chloroherpeton thalassium (strain ATCC 35110 / GB-78).